Reading from the N-terminus, the 134-residue chain is Ribosome-binding factor A (134 aa).

It belongs to the RbfA family. In terms of assembly, monomer. Binds 30S ribosomal subunits, but not 50S ribosomal subunits or 70S ribosomes.

It is found in the cytoplasm. In terms of biological role, one of several proteins that assist in the late maturation steps of the functional core of the 30S ribosomal subunit. Associates with free 30S ribosomal subunits (but not with 30S subunits that are part of 70S ribosomes or polysomes). Required for efficient processing of 16S rRNA. May interact with the 5'-terminal helix region of 16S rRNA. The polypeptide is Ribosome-binding factor A (Synechococcus sp. (strain CC9311)).